A 247-amino-acid polypeptide reads, in one-letter code: Sortase A (247 aa).

The Cytoplasmic segment spans residues 1–9; that stretch reads MRNKKKLHG. Residues 10-30 form a helical membrane-spanning segment; that stretch reads FFNFVRWLLVVLLIIVGLALV. The Extracellular portion of the chain corresponds to 31–247; it reads FNKPIRNAFI…FSKKYNQINL (217 aa). Catalysis depends on His140, which acts as the Proton donor/acceptor. Cys206 (acyl-thioester intermediate) is an active-site residue.

It belongs to the bacterial sortase family. Class A subfamily.

It is found in the cell membrane. Functionally, transpeptidase that anchors surface proteins to the cell wall. Recognizes and modifies its substrate by proteolytic cleavage of a C-terminal sorting signal. Following cleavage, a covalent intermediate is formed via a thioester bond between the sortase and its substrate, which is then transferred and covalently attached to the cell wall. This sortase recognizes a Leu-Pro-x-Thr-Gly (LPXTG) motif, which is cleaved by the sortase between the threonine and glycine residues. Essential for adherence to eukaryotic cells and for binding to fibronectin and fibrinogen. This Streptococcus agalactiae serotype III (strain NEM316) protein is Sortase A.